The sequence spans 200 residues: 3-isopropylmalate dehydratase small subunit (200 aa).

The protein belongs to the LeuD family. LeuD type 1 subfamily. As to quaternary structure, heterodimer of LeuC and LeuD.

It carries out the reaction (2R,3S)-3-isopropylmalate = (2S)-2-isopropylmalate. The protein operates within amino-acid biosynthesis; L-leucine biosynthesis; L-leucine from 3-methyl-2-oxobutanoate: step 2/4. Its function is as follows. Catalyzes the isomerization between 2-isopropylmalate and 3-isopropylmalate, via the formation of 2-isopropylmaleate. The sequence is that of 3-isopropylmalate dehydratase small subunit from Vibrio vulnificus (strain CMCP6).